The chain runs to 195 residues: Imidazoleglycerol-phosphate dehydratase (195 aa).

This sequence belongs to the imidazoleglycerol-phosphate dehydratase family.

It localises to the cytoplasm. It catalyses the reaction D-erythro-1-(imidazol-4-yl)glycerol 3-phosphate = 3-(imidazol-4-yl)-2-oxopropyl phosphate + H2O. Its pathway is amino-acid biosynthesis; L-histidine biosynthesis; L-histidine from 5-phospho-alpha-D-ribose 1-diphosphate: step 6/9. The sequence is that of Imidazoleglycerol-phosphate dehydratase from Pelobacter propionicus (strain DSM 2379 / NBRC 103807 / OttBd1).